The chain runs to 232 residues: DQGAGVTYLEPSASQIGHKESIKDTARVLGRMYDGIEYRGFGQDVVEELAKYAGVPVFNGLTNEFHPTQMLADALTMREHSGKPLSQTAFAYVGDARYNMANSLLVLGAKLGMDVRIGAPKTLWPSEHIVARARAVAKETGGRILLTENAEEAVKGVDFIHTDVWVSMGEPKEAWQERIDLLKDYRVTPELMAASGNPQVKFMHCLPAFHNRETKVGEWIYETFGLNGVEVT.

Carbamoyl phosphate-binding positions include Gln15, Arg39, and 66–69; that span reads HPTQ. Residues Asn99, Asp163, and 167–168 each bind L-ornithine; that span reads SM. Carbamoyl phosphate-binding positions include 204–207 and Thr232; that span reads HCLP.

The protein belongs to the aspartate/ornithine carbamoyltransferase superfamily. OTCase family.

The protein resides in the cytoplasm. It carries out the reaction carbamoyl phosphate + L-ornithine = L-citrulline + phosphate + H(+). It functions in the pathway amino-acid biosynthesis; L-arginine biosynthesis; L-arginine from L-ornithine and carbamoyl phosphate: step 1/3. Reversibly catalyzes the transfer of the carbamoyl group from carbamoyl phosphate (CP) to the N(epsilon) atom of ornithine (ORN) to produce L-citrulline. The sequence is that of Ornithine carbamoyltransferase (argF) from Neisseria pharyngis.